The sequence spans 268 residues: Hydroxyethylthiazole kinase (268 aa).

Residue Met45 coordinates substrate. ATP contacts are provided by Arg121 and Thr167. Gly194 contributes to the substrate binding site.

The protein belongs to the Thz kinase family. Mg(2+) is required as a cofactor.

It catalyses the reaction 5-(2-hydroxyethyl)-4-methylthiazole + ATP = 4-methyl-5-(2-phosphooxyethyl)-thiazole + ADP + H(+). It participates in cofactor biosynthesis; thiamine diphosphate biosynthesis; 4-methyl-5-(2-phosphoethyl)-thiazole from 5-(2-hydroxyethyl)-4-methylthiazole: step 1/1. In terms of biological role, catalyzes the phosphorylation of the hydroxyl group of 4-methyl-5-beta-hydroxyethylthiazole (THZ). The sequence is that of Hydroxyethylthiazole kinase from Bacillus anthracis (strain A0248).